The sequence spans 292 residues: Cytidine deaminase (292 aa).

CMP/dCMP-type deaminase domains lie at 47-167 (TPLK…FGPK) and 186-292 (DHQD…YYSL). 88–90 (NQE) lines the substrate pocket. H101 contributes to the Zn(2+) binding site. E103 serves as the catalytic Proton donor. Zn(2+)-binding residues include C128 and C131.

Belongs to the cytidine and deoxycytidylate deaminase family. As to quaternary structure, homodimer. Zn(2+) serves as cofactor.

The catalysed reaction is cytidine + H2O + H(+) = uridine + NH4(+). It catalyses the reaction 2'-deoxycytidine + H2O + H(+) = 2'-deoxyuridine + NH4(+). In terms of biological role, this enzyme scavenges exogenous and endogenous cytidine and 2'-deoxycytidine for UMP synthesis. This is Cytidine deaminase from Haemophilus influenzae (strain 86-028NP).